Reading from the N-terminus, the 264-residue chain is Thymidylate synthase (264 aa).

Arginine 21 contributes to the dUMP binding site. Histidine 51 serves as a coordination point for (6R)-5,10-methylene-5,6,7,8-tetrahydrofolate. Arginine 126–arginine 127 is a binding site for dUMP. Cysteine 146 functions as the Nucleophile in the catalytic mechanism. Residues arginine 166 to aspartate 169, asparagine 177, and histidine 207 to tyrosine 209 each bind dUMP. Aspartate 169 contributes to the (6R)-5,10-methylene-5,6,7,8-tetrahydrofolate binding site. Alanine 263 serves as a coordination point for (6R)-5,10-methylene-5,6,7,8-tetrahydrofolate.

Belongs to the thymidylate synthase family. Bacterial-type ThyA subfamily. In terms of assembly, homodimer.

It localises to the cytoplasm. The enzyme catalyses dUMP + (6R)-5,10-methylene-5,6,7,8-tetrahydrofolate = 7,8-dihydrofolate + dTMP. It participates in pyrimidine metabolism; dTTP biosynthesis. Catalyzes the reductive methylation of 2'-deoxyuridine-5'-monophosphate (dUMP) to 2'-deoxythymidine-5'-monophosphate (dTMP) while utilizing 5,10-methylenetetrahydrofolate (mTHF) as the methyl donor and reductant in the reaction, yielding dihydrofolate (DHF) as a by-product. This enzymatic reaction provides an intracellular de novo source of dTMP, an essential precursor for DNA biosynthesis. The chain is Thymidylate synthase from Shewanella putrefaciens (strain CN-32 / ATCC BAA-453).